A 113-amino-acid chain; its full sequence is Probable protein L3 (113 aa).

This chain is Probable protein L3, found in Bos taurus (Bovine).